A 282-amino-acid chain; its full sequence is 1D-myo-inositol 2-acetamido-2-deoxy-alpha-D-glucopyranoside deacetylase (282 aa).

Zn(2+) contacts are provided by His-6, Asp-9, and His-141.

The protein belongs to the MshB deacetylase family. The cofactor is Zn(2+).

It carries out the reaction 1D-myo-inositol 2-acetamido-2-deoxy-alpha-D-glucopyranoside + H2O = 1D-myo-inositol 2-amino-2-deoxy-alpha-D-glucopyranoside + acetate. Its function is as follows. Catalyzes the deacetylation of 1D-myo-inositol 2-acetamido-2-deoxy-alpha-D-glucopyranoside (GlcNAc-Ins) in the mycothiol biosynthesis pathway. The sequence is that of 1D-myo-inositol 2-acetamido-2-deoxy-alpha-D-glucopyranoside deacetylase from Nocardiopsis dassonvillei (strain ATCC 23218 / DSM 43111 / CIP 107115 / JCM 7437 / KCTC 9190 / NBRC 14626 / NCTC 10488 / NRRL B-5397 / IMRU 509) (Actinomadura dassonvillei).